We begin with the raw amino-acid sequence, 663 residues long: Alcohol oxidase 2 (663 aa).

Position 8–38 (8–38 (DILVLGGGSSGSCIAGRLANLDHSLKVGLIE)) interacts with FAD. His-567 (proton acceptor) is an active-site residue. Positions 661 to 663 (ARF) match the Microbody targeting signal motif.

It belongs to the GMC oxidoreductase family. Homooctamer. It depends on FAD as a cofactor.

The protein resides in the peroxisome matrix. It catalyses the reaction a primary alcohol + O2 = an aldehyde + H2O2. It functions in the pathway energy metabolism; methane degradation. In terms of biological role, minor isoform of alcohol oxidase, which catalyzes the oxidation of methanol to formaldehyde and hydrogen peroxide, the first step in the methanol utilization pathway of methylotrophic yeasts. This chain is Alcohol oxidase 2 (AOX2), found in Komagataella phaffii (strain ATCC 76273 / CBS 7435 / CECT 11047 / NRRL Y-11430 / Wegner 21-1) (Yeast).